The sequence spans 472 residues: Karilysin (472 aa).

The first 20 residues, 1–20 (MKRFILLFFLSTIAIFKVYS), serve as a signal peptide directing secretion. Positions 21 to 34 (QRLYDNGPLTGDNN) are cleaved as a propeptide — activation peptide. Residues His102, Asp104, His117, His133, and His155 each coordinate Zn(2+). Residue Glu156 is the Proton donor/acceptor of the active site. Positions 159 and 165 each coordinate Zn(2+). A propeptide spans 196-386 (YGYPFSISGP…AVSCSRTISP (191 aa)) (removed in short form). A propeptide spans 387-472 (FTLSPNPATD…QTYTQKLIKK (86 aa)) (removed in long form).

It belongs to the peptidase M10A family. Zn(2+) is required as a cofactor. Post-translationally, processes itself into the mature 18-kDa enzyme (Kly18) through sequential autoproteolytic cleavage at both the N- and C-termini. However, the maturation intermediate Kly38 is found to be more active than Kly18 and the rate for its processing is slow, which raises the question as to whether Kly38 is a physiologically relevant entity.

Its subcellular location is the secreted. Its activity is regulated as follows. Autoprocessing and proteolytic activity are completely inhibited by EDTA and 1,10-phenanthroline in vitro. Proteolytic activity is 3-fold enhanced by Ca(2+) due to stabilization of the protein structure but inhibited by an excess of Zn(2+). Inhibitory studies of karilysin identified several phage display-selected peptides with apparent inhibition constants (Ki) in the micromolar range, among which is the tetrapeptide SWFP (Ki=10.7 uM). In terms of biological role, metalloprotease able to cleave casein, gelatin, elastin, fibrinogen and fibronectin. Shows exclusive preference for hydrophobic residues, especially Leu, Tyr and Met, at the P1' position of substrates, and for Pro or Ala at P3. Can efficiently cleave the antimicrobial peptide LL-37 which is a component of the immune system, leading to a significant reduction of its bactericidal activity. Is also able to inhibit all pathways of the human complement system. The classical and lectin complement pathways are inhibited because of the efficient degradation of mannose-binding lectin, ficolin-2, ficolin-3, and C4 by karilysin, whereas inhibition of the terminal pathway is caused by cleavage of C5. Thus, karilysin appears to be a major virulence factor of T.forsythia that contributes to evasion of the human immune response and periodontal disease. Seems to act synergistically with gingipains from the periodontal pathogen P.gingivalis present at the same sites of infection. This is Karilysin (kly) from Tannerella forsythia (strain ATCC 43037 / JCM 10827 / CCUG 21028 A / KCTC 5666 / FDC 338) (Bacteroides forsythus).